A 490-amino-acid polypeptide reads, in one-letter code: MSRYGLQKLYINGAYTDSTSGDTFDAVNPANGECIAQLQAANAQDVDKAVAAAKQGQPVWAAMTAMERSRILRRAVDILRDRNDELAAIETADTGKPLSETRSVDIVTGADVLEYYAGLIPALEGQQIPLRGSAFVYTRREPLGVVAGIGAWNYPLQIALWKSAPALAAGNAMIFKPSEVTSLTALKLAGIYTEAGLPAGVFNVLTGSGDQVGQMLTEHPGIAKVSFTGGIASGKKVMANAAGSTLKDVTMELGGKSPLIIFADADLDKAADIAMMANFYSSGQVCTNGTRVFVPQALQAAFEQKIVERVKRIHIGDPSDERTNFGPLVSFQHRDSVMRYIDSGKREGATLLIGGYSLTEGALAHGAYVAPTVFTHCRDDMQIVREEIFGPVMSILSYQSEEEVIRRANDTEYGLAAGVVTQDLNRAHRVIHQLQAGICWINTWGESAPEMPVGGYKHSGVGRENGISTLEHYTQIKSIQVELGSFNSVF.

K(+) is bound at residue D93. 150-152 (GAW) contacts NAD(+). K162 acts as the Charge relay system in catalysis. Residue 176-179 (KPSE) coordinates NAD(+). V180 serves as a coordination point for K(+). 230–233 (GIAS) lines the NAD(+) pocket. Position 246 (L246) interacts with K(+). The Proton acceptor role is filled by E252. The NAD(+) site is built by G254, C286, and E387. Residue C286 is the Nucleophile of the active site. Position 286 is a cysteine sulfenic acid (-SOH) (C286). 2 residues coordinate K(+): K457 and G460. E464 (charge relay system) is an active-site residue.

It belongs to the aldehyde dehydrogenase family. Dimer of dimers. K(+) is required as a cofactor.

It catalyses the reaction betaine aldehyde + NAD(+) + H2O = glycine betaine + NADH + 2 H(+). Its pathway is amine and polyamine biosynthesis; betaine biosynthesis via choline pathway; betaine from betaine aldehyde: step 1/1. Involved in the biosynthesis of the osmoprotectant glycine betaine. Catalyzes the irreversible oxidation of betaine aldehyde to the corresponding acid. The sequence is that of Betaine aldehyde dehydrogenase from Yersinia pestis.